We begin with the raw amino-acid sequence, 670 residues long: UvrABC system protein B (670 aa).

One can recognise a Helicase ATP-binding domain in the interval 26 to 183; sequence EGLEDGLAHQ…RRLAELQYSR (158 aa). 39–46 contacts ATP; sequence GVTGSGKT. Residues 92 to 115 carry the Beta-hairpin motif; it reads YYDYYQPEAYVPSSDTFIEKDASV. The Helicase C-terminal domain maps to 431 to 597; that stretch reads QVDDLLSEIR…GLNKKISDIL (167 aa). The UVR domain occupies 630–665; that stretch reads ELKIRELESKMLTHAQNLEFEEAAALRDELQALRAQ.

The protein belongs to the UvrB family. As to quaternary structure, forms a heterotetramer with UvrA during the search for lesions. Interacts with UvrC in an incision complex.

It is found in the cytoplasm. Its function is as follows. The UvrABC repair system catalyzes the recognition and processing of DNA lesions. A damage recognition complex composed of 2 UvrA and 2 UvrB subunits scans DNA for abnormalities. Upon binding of the UvrA(2)B(2) complex to a putative damaged site, the DNA wraps around one UvrB monomer. DNA wrap is dependent on ATP binding by UvrB and probably causes local melting of the DNA helix, facilitating insertion of UvrB beta-hairpin between the DNA strands. Then UvrB probes one DNA strand for the presence of a lesion. If a lesion is found the UvrA subunits dissociate and the UvrB-DNA preincision complex is formed. This complex is subsequently bound by UvrC and the second UvrB is released. If no lesion is found, the DNA wraps around the other UvrB subunit that will check the other stand for damage. This is UvrABC system protein B from Pectobacterium carotovorum subsp. carotovorum (strain PC1).